The sequence spans 1319 residues: Girdin homolog (1319 aa).

A Calponin-homology (CH) domain is found at 6 to 118; sequence ENWSHPLAFW…KLLLLLLGCA (113 aa). 3 coiled-coil regions span residues 141 to 173, 218 to 690, and 732 to 1096; these read ELAA…TDEV, TSEL…ADLI, and KRER…KKST. The interval 166–222 is disordered; sequence KMKETDEVGGGGGSIEDVDSDDMESSTTSSSNGEIAIKQQDQSFLMSRSTSPTSELR. The span at 204-222 shows a compositional bias: polar residues; sequence QQDQSFLMSRSTSPTSELR. Disordered regions lie at residues 1112-1236 and 1289-1308; these read INRR…SPAH and NVNL…LKPN. Residues 1118–1131 are compositionally biased toward polar residues; the sequence is TSNGGSTTEDSSVY.

The protein belongs to the CCDC88 family. Expressed in AQR and PQR gas-sensing neurons in hermaphrodites (at protein level).

Its subcellular location is the cytoplasm. The protein resides in the cytoskeleton. It is found in the cilium basal body. It localises to the microtubule organizing center. The protein localises to the centrosome. Its subcellular location is the centriole. In terms of biological role, scaffolding protein that plays a role in ciliogenesis, cilium positioning and dendrite anchoring in sensory amphid neurons including AWB, AWA, AWC, ADL and ASI, the phasmid neurons PHA and PHB and the gas sensing neurons AQR, PQR, URX and BAG. Its role in cilium positioning may be through regulation of the localization of cell adhesion proteins such as the apical junction protein ajm-1, and the ciliary scaffolding protein Rootletin/che-10. Plays a more prominent role in regulating dendrite morphogenesis in AQR than in PQR neurons. Regulates localization of hmr-1 to the distal AQR dendrite. During embryonic elongation, required for the anchoring of URX and BAG dendrites to the presumptive nose. In Caenorhabditis elegans, this protein is Girdin homolog.